A 438-amino-acid polypeptide reads, in one-letter code: tRNA modification GTPase MnmE (438 aa).

3 residues coordinate (6S)-5-formyl-5,6,7,8-tetrahydrofolate: R20, E76, and K115. In terms of domain architecture, TrmE-type G spans 210 to 370; it reads NFTIMILGRR…LKCFINKIVD (161 aa). N220 is a binding site for K(+). GTP is bound by residues 220 to 225, 239 to 245, and 264 to 267; these read NVGKST, TNIPGTT, and DTAG. S224 contacts Mg(2+). Residues T239, I241, and T244 each contribute to the K(+) site. Residue T245 coordinates Mg(2+). K438 contributes to the (6S)-5-formyl-5,6,7,8-tetrahydrofolate binding site.

This sequence belongs to the TRAFAC class TrmE-Era-EngA-EngB-Septin-like GTPase superfamily. TrmE GTPase family. Homodimer. Heterotetramer of two MnmE and two MnmG subunits. K(+) is required as a cofactor.

Its subcellular location is the cytoplasm. Exhibits a very high intrinsic GTPase hydrolysis rate. Involved in the addition of a carboxymethylaminomethyl (cmnm) group at the wobble position (U34) of certain tRNAs, forming tRNA-cmnm(5)s(2)U34. The chain is tRNA modification GTPase MnmE from Carsonella ruddii (strain PV).